A 415-amino-acid polypeptide reads, in one-letter code: Tyrosine--tRNA ligase (415 aa).

Residues 54-63 (PTGSNIHLGH) carry the 'HIGH' region motif. The 'KMSKS' region motif lies at 248–252 (KMSKS). Lys251 contributes to the ATP binding site. An S4 RNA-binding domain is found at 351–415 (AKAFYLLSAV…GKKTFRRLTA (65 aa)).

This sequence belongs to the class-I aminoacyl-tRNA synthetase family. TyrS type 2 subfamily. In terms of assembly, homodimer.

The protein resides in the cytoplasm. The enzyme catalyses tRNA(Tyr) + L-tyrosine + ATP = L-tyrosyl-tRNA(Tyr) + AMP + diphosphate + H(+). In terms of biological role, catalyzes the attachment of tyrosine to tRNA(Tyr) in a two-step reaction: tyrosine is first activated by ATP to form Tyr-AMP and then transferred to the acceptor end of tRNA(Tyr). This is Tyrosine--tRNA ligase from Parasynechococcus marenigrum (strain WH8102).